Here is a 209-residue protein sequence, read N- to C-terminus: Orotate phosphoribosyltransferase (209 aa).

5-phospho-alpha-D-ribose 1-diphosphate-binding positions include Arg-96, Lys-100, His-102, and 122–130; that span reads EDLISTGGS. Orotate is bound at residue Ser-126.

This sequence belongs to the purine/pyrimidine phosphoribosyltransferase family. PyrE subfamily. As to quaternary structure, homodimer. The cofactor is Mg(2+).

The enzyme catalyses orotidine 5'-phosphate + diphosphate = orotate + 5-phospho-alpha-D-ribose 1-diphosphate. It participates in pyrimidine metabolism; UMP biosynthesis via de novo pathway; UMP from orotate: step 1/2. In terms of biological role, catalyzes the transfer of a ribosyl phosphate group from 5-phosphoribose 1-diphosphate to orotate, leading to the formation of orotidine monophosphate (OMP). The sequence is that of Orotate phosphoribosyltransferase from Listeria monocytogenes serotype 4b (strain F2365).